A 663-amino-acid chain; its full sequence is Zinc finger protein GLI2 (663 aa).

Residues 159 to 186 (ISSNSNCISDSSQSKQSSESAVSSTVNP) are disordered. Positions 160–182 (SSNSNCISDSSQSKQSSESAVSS) are enriched in low complexity. 5 consecutive C2H2-type zinc fingers follow at residues 234-259 (TNCH…NNDH), 267-294 (FVCR…MRRH), 300-324 (HKCT…LRSH), 330-355 (YVCE…NRTH), and 361-386 (YVCK…KTVH). 4 disordered regions span residues 374 to 440 (DPSS…MEDC), 452 to 481 (VMCQ…DSGV), 544 to 578 (CSWV…SRTL), and 619 to 663 (SGIS…DIKL). Residues 386–402 (HGPDAHVTKKQRNDVHP) show a composition bias toward basic and acidic residues. Low complexity predominate over residues 456 to 473 (SSPGGQSSCSSEPSPLGS). 2 stretches are compositionally biased toward polar residues: residues 563–578 (GNGS…SRTL) and 619–647 (SGIS…SSAD).

The protein belongs to the GLI C2H2-type zinc-finger protein family.

The protein localises to the nucleus. Its subcellular location is the cytoplasm. It is found in the cell projection. The protein resides in the cilium. Its function is as follows. Functions as a transcription regulator in the hedgehog (Hh) pathway. Functions as a transcriptional activator. May also function as transcriptional repressor. Binds to the DNA sequence 5'-GAACCACCCA-3'. Is involved in the smoothened (SHH) signaling pathway. Required for normal skeleton development. The chain is Zinc finger protein GLI2 from Gallus gallus (Chicken).